The sequence spans 107 residues: Ig kappa chain V region 4135 (107 aa).

The interval 1–24 (ADIVMTQTPASVSEPVGGTVTIKC) is framework-1. A complementarity-determining-1 region spans residues 25–35 (QTSQSIDDYLS). Residues 36 to 50 (WYQQKPGQPPKGLIY) are framework-2. The interval 51–57 (RASTLAS) is complementarity-determining-2. Residues 58-89 (GVPSRFRGSGSGTDFTLTISDLECADAATYYC) form a framework-3 region. Residues 90-96 (QSTYGVG) are complementarity-determining-3. The segment at 97–106 (FGGGTEVVVK) is framework-4.

This Oryctolagus cuniculus (Rabbit) protein is Ig kappa chain V region 4135.